We begin with the raw amino-acid sequence, 27 residues long: RGSXLTTLPLRNIMDMLHMGXITIGTP.

It belongs to the peptidase A1 family. In terms of processing, glycosylated. As to expression, placenta.

The protein is Pregnancy-associated glycoprotein 59 (PAG59) of Capra hircus (Goat).